We begin with the raw amino-acid sequence, 362 residues long: Alkanal monooxygenase alpha chain (362 aa).

The protein belongs to the bacterial luciferase oxidoreductase family. As to quaternary structure, heterodimer of an alpha and a beta chain.

It carries out the reaction a long-chain fatty aldehyde + FMNH2 + O2 = a long-chain fatty acid + hnu + FMN + H2O + 2 H(+). Its function is as follows. Light-emitting reaction in luminous bacteria. The polypeptide is Alkanal monooxygenase alpha chain (luxA) (Photorhabdus luminescens (Xenorhabdus luminescens)).